The chain runs to 386 residues: Ferredoxin--NADP reductase (386 aa).

Residues 9-67 (SRMFRYEVVGLRQTAETEKTNYAIRNSGSQFFNVPYDRMNQFMQQITRWGGKIVSIQPL) enclose the CpcD-like domain. The FAD-binding FR-type domain occupies 104–228 (NNPCIGKVIS…TGPVGKEMLL (125 aa)). FAD contacts are provided by residues 163–166 (RLYS), 184–186 (CVR), tyrosine 190, 202–204 (VCS), and threonine 243. NADP(+)-binding residues include serine 166 and arginine 186. NADP(+) contacts are provided by residues threonine 243, 275-276 (VA), 305-306 (SR), 315-319 (KMYIQ), 344-345 (GL), and glutamate 384.

The protein belongs to the ferredoxin--NADP reductase type 1 family. The cofactor is FAD.

It localises to the cellular thylakoid membrane. It catalyses the reaction 2 reduced [2Fe-2S]-[ferredoxin] + NADP(+) + H(+) = 2 oxidized [2Fe-2S]-[ferredoxin] + NADPH. The sequence is that of Ferredoxin--NADP reductase (petH) from Thermosynechococcus vestitus (strain NIES-2133 / IAM M-273 / BP-1).